We begin with the raw amino-acid sequence, 468 residues long: Aldehyde dehydrogenase family 3 member B1 (468 aa).

The residue at position 1 (Met-1) is an N-acetylmethionine. 188–193 (GNTYVG) contributes to the NAD(+) binding site. Residues Glu-210 and Cys-244 contribute to the active site. 2 S-palmitoyl cysteine lipidation sites follow: Cys-462 and Cys-463. Cys-465 carries the post-translational modification Cysteine methyl ester. Cys-465 is lipidated: S-geranylgeranyl cysteine. Residues 466–468 (TLL) constitute a propeptide, removed in mature form.

This sequence belongs to the aldehyde dehydrogenase family. Post-translationally, dually lipidated in the C-terminus; prenylation occurs prior to, and is a prerequisite for palmitoylation. It is also required for activity towards long-chain substrates.

The protein resides in the cell membrane. It catalyses the reaction an aldehyde + NAD(+) + H2O = a carboxylate + NADH + 2 H(+). It carries out the reaction a long-chain fatty aldehyde + NAD(+) + H2O = a long-chain fatty acid + NADH + 2 H(+). The catalysed reaction is a medium-chain fatty aldehyde + NAD(+) + H2O = a medium-chain fatty acid + NADH + 2 H(+). The enzyme catalyses octanal + NAD(+) + H2O = octanoate + NADH + 2 H(+). It catalyses the reaction nonanal + NAD(+) + H2O = nonanoate + NADH + 2 H(+). It carries out the reaction hexadecanoate + NADH + 2 H(+) = hexadecanal + NAD(+) + H2O. The catalysed reaction is (2E)-octenal + NAD(+) + H2O = (2E)-octenoate + NADH + 2 H(+). The enzyme catalyses (E)-non-2-enal + NAD(+) + H2O = (E)-non-2-enoate + NADH + 2 H(+). It catalyses the reaction (E)-4-hydroxynon-2-enal + NAD(+) + H2O = (E)-4-hydroxynon-2-enoate + NADH + 2 H(+). It carries out the reaction (2E)-hexadecenal + NAD(+) + H2O = (E)-hexadec-2-enoate + NADH + 2 H(+). The catalysed reaction is benzaldehyde + NAD(+) + H2O = benzoate + NADH + 2 H(+). The enzyme catalyses an aldehyde + NADP(+) + H2O = a carboxylate + NADPH + 2 H(+). It catalyses the reaction a medium-chain fatty aldehyde + NADP(+) + H2O = a medium-chain fatty acid + NADPH + 2 H(+). It carries out the reaction hexanal + NADP(+) + H2O = hexanoate + NADPH + 2 H(+). The catalysed reaction is octanal + NADP(+) + H2O = octanoate + NADPH + 2 H(+). The enzyme catalyses nonanal + NADP(+) + H2O = nonanoate + NADPH + 2 H(+). It catalyses the reaction (2E)-octenal + NADP(+) + H2O = (2E)-octenoate + NADPH + 2 H(+). It carries out the reaction (E)-non-2-enal + NADP(+) + H2O = (E)-non-2-enoate + NADPH + 2 H(+). The catalysed reaction is (E)-4-hydroxynon-2-enal + NADP(+) + H2O = (E)-4-hydroxynon-2-enoate + NADPH + 2 H(+). The enzyme catalyses benzaldehyde + NADP(+) + H2O = benzoate + NADPH + 2 H(+). It functions in the pathway alcohol metabolism; ethanol degradation; acetate from ethanol: step 2/2. Functionally, oxidizes medium and long chain saturated and unsaturated fatty aldehydes generated in the plasma membrane into non-toxic fatty acids. May have a protective role against the cytotoxicity induced by lipid peroxidation. Short-chain fatty aldehydes are not good substrates. Can use both NADP(+) and NAD(+) as electron acceptor in vitro, however in vivo preference will depend on their tissue levels. Low activity towards acetaldehyde and 3,4-dihydroxyphenylacetaldehyde. Able to metabolize aromatic aldehydes such as benzaldehyde to their acid form. This is Aldehyde dehydrogenase family 3 member B1 (Aldh3b1) from Rattus norvegicus (Rat).